The following is a 493-amino-acid chain: Glutamate--tRNA ligase (493 aa).

The 'HIGH' region signature appears at 10 to 20 (PSPTGDPHVGT). The 'KMSKS' region motif lies at 251-255 (KLSKR). Lys-254 serves as a coordination point for ATP.

This sequence belongs to the class-I aminoacyl-tRNA synthetase family. Glutamate--tRNA ligase type 1 subfamily. As to quaternary structure, monomer.

Its subcellular location is the cytoplasm. The enzyme catalyses tRNA(Glu) + L-glutamate + ATP = L-glutamyl-tRNA(Glu) + AMP + diphosphate. Functionally, catalyzes the attachment of glutamate to tRNA(Glu) in a two-step reaction: glutamate is first activated by ATP to form Glu-AMP and then transferred to the acceptor end of tRNA(Glu). This is Glutamate--tRNA ligase from Pseudomonas fluorescens (strain Pf0-1).